Here is a 390-residue protein sequence, read N- to C-terminus: Chorismate synthase (390 aa).

Residues R48 and R54 each contribute to the NADP(+) site. Residues 132-134 (RSS), 244-245 (NA), G289, 304-308 (KPTSS), and R330 contribute to the FMN site. The tract at residues 362-390 (VGAHPAGAHPAGADPAGTHPGGPGGFQPG) is disordered. Residues 363 to 379 (GAHPAGAHPAGADPAGT) are compositionally biased toward low complexity. Positions 380–390 (HPGGPGGFQPG) are enriched in gly residues.

Belongs to the chorismate synthase family. Homotetramer. It depends on FMNH2 as a cofactor.

The enzyme catalyses 5-O-(1-carboxyvinyl)-3-phosphoshikimate = chorismate + phosphate. It participates in metabolic intermediate biosynthesis; chorismate biosynthesis; chorismate from D-erythrose 4-phosphate and phosphoenolpyruvate: step 7/7. In terms of biological role, catalyzes the anti-1,4-elimination of the C-3 phosphate and the C-6 proR hydrogen from 5-enolpyruvylshikimate-3-phosphate (EPSP) to yield chorismate, which is the branch point compound that serves as the starting substrate for the three terminal pathways of aromatic amino acid biosynthesis. This reaction introduces a second double bond into the aromatic ring system. The polypeptide is Chorismate synthase (Methylobacterium sp. (strain 4-46)).